A 137-amino-acid chain; its full sequence is Flagellar basal body rod protein FlgB (137 aa).

This sequence belongs to the flagella basal body rod proteins family. In terms of assembly, the basal body constitutes a major portion of the flagellar organelle and consists of a number of rings mounted on a central rod. In Gram-negative bacteria, at least four rings, L, P, S and M are present, whereas Gram-positive bacteria lack the L and P rings. The rod consists of about 26 subunits of FlgG in the distal portion, and FlgB, FlgC and FlgF build up the proximal portion of the rod with about 6 subunits each. Rod assembly occurs by export via the flagellum-specific pathway of its constituent proteins and by their incorporation into the rod structure in the probable order of FlgB, FlgC, FlgF and FlgG. Another protein, FliE, also assembles onto the stable rod structure.

The protein localises to the bacterial flagellum basal body. Its function is as follows. Structural component of flagellum, the bacterial motility apparatus. Part of the rod structure of flagellar basal body. This Proteus mirabilis (strain HI4320) protein is Flagellar basal body rod protein FlgB.